Here is a 197-residue protein sequence, read N- to C-terminus: MAERVATVSRDTHETQIQVHVNLDGQGHFQCETGVAFLDHMLDQVARHGLIDLDIHAKGDLHIDDHHTVEDLGITLGQAVAQAIGDKRGIRRYGHAYVPLDEALSRVVVDFSGRPGLSMDVEFTRASIGRFDTQLFWEFFQGFVNHAQVTLHIDNLKGFNAHHQAETIFKAFGRALRMAVEPDPRMAGRMPSTKGSL.

This sequence belongs to the imidazoleglycerol-phosphate dehydratase family.

The protein localises to the cytoplasm. It catalyses the reaction D-erythro-1-(imidazol-4-yl)glycerol 3-phosphate = 3-(imidazol-4-yl)-2-oxopropyl phosphate + H2O. Its pathway is amino-acid biosynthesis; L-histidine biosynthesis; L-histidine from 5-phospho-alpha-D-ribose 1-diphosphate: step 6/9. The protein is Imidazoleglycerol-phosphate dehydratase of Chromohalobacter salexigens (strain ATCC BAA-138 / DSM 3043 / CIP 106854 / NCIMB 13768 / 1H11).